The chain runs to 235 residues: MTTVLPAFWAVIPAAGIGARMAADRPKQYLQLGGQTILEHSLDCFLDHSALKGVVVSIAEDDPYWPGLRCASDLRIQRAPGGRERADSVLNALLLLHAQGASDDDWVLVHDAARPNLARSDLDKLLSELADDPVGGLLAVPARDTLKRAGADGRVAATVDRSTVWQAYTPQMFRLGMLHRALAECLVSDVAVTDESSAIEWAGHAPRLVEGRSDNIKVTRPEDLEWLRQRWSGRR.

The protein belongs to the IspD/TarI cytidylyltransferase family. IspD subfamily.

The enzyme catalyses 2-C-methyl-D-erythritol 4-phosphate + CTP + H(+) = 4-CDP-2-C-methyl-D-erythritol + diphosphate. Its pathway is isoprenoid biosynthesis; isopentenyl diphosphate biosynthesis via DXP pathway; isopentenyl diphosphate from 1-deoxy-D-xylulose 5-phosphate: step 2/6. Its function is as follows. Catalyzes the formation of 4-diphosphocytidyl-2-C-methyl-D-erythritol from CTP and 2-C-methyl-D-erythritol 4-phosphate (MEP). The chain is 2-C-methyl-D-erythritol 4-phosphate cytidylyltransferase from Pseudomonas entomophila (strain L48).